We begin with the raw amino-acid sequence, 578 residues long: Asparagine synthetase [glutamine-hydrolyzing] 2 (578 aa).

Cys-2 acts as the For GATase activity in catalysis. The Glutamine amidotransferase type-2 domain occupies Cys-2–Gly-185. L-glutamine contacts are provided by residues Arg-50–Ile-54, Asn-75–Glu-77, and Asp-98. Residues Leu-210 to Lys-450 form the Asparagine synthetase domain. Residues Leu-231, Ile-267, and Ser-341–Gly-342 each bind ATP.

Expressed in the vascular region adjacent to leaf mesophyll cells in the companion cell-sieve tube element complex.

The catalysed reaction is L-aspartate + L-glutamine + ATP + H2O = L-asparagine + L-glutamate + AMP + diphosphate + H(+). It participates in amino-acid biosynthesis; L-asparagine biosynthesis. Its function is as follows. Essential for nitrogen assimilation, distribution and remobilization within the plant via the phloem. This Arabidopsis thaliana (Mouse-ear cress) protein is Asparagine synthetase [glutamine-hydrolyzing] 2 (ASN2).